Here is a 209-residue protein sequence, read N- to C-terminus: NDR1/HIN1-like protein 1 (209 aa).

Residues 18 to 38 (IFWSIIFVLFIIFLTILLIWA) form a helical membrane-spanning segment. Asn-58 carries N-linked (GlcNAc...) asparagine glycosylation.

In terms of tissue distribution, expressed in rosette leaves, cauline leaves, stems, and siliques, and at lower levels in roots and flowers.

The protein localises to the cell membrane. In terms of biological role, may play a role in plant immunity. The polypeptide is NDR1/HIN1-like protein 1 (Arabidopsis thaliana (Mouse-ear cress)).